Reading from the N-terminus, the 200-residue chain is Imidazoleglycerol-phosphate dehydratase (200 aa).

Substrate contacts are provided by residues Glu-13, 39–47 (HMLTLLTFH), 68–72 (HHLIE), Arg-94, and Arg-116. His-39, His-68, His-69, and Glu-72 together coordinate Mn(2+). Residues Glu-141, His-165, His-166, and Glu-169 each contribute to the Mn(2+) site. Substrate contacts are provided by residues 165 to 173 (HHIIEGMFK) and 195 to 197 (SSK).

This sequence belongs to the imidazoleglycerol-phosphate dehydratase family. Mn(2+) serves as cofactor.

The protein resides in the cytoplasm. It carries out the reaction D-erythro-1-(imidazol-4-yl)glycerol 3-phosphate = 3-(imidazol-4-yl)-2-oxopropyl phosphate + H2O. Its pathway is amino-acid biosynthesis; L-histidine biosynthesis; L-histidine from 5-phospho-alpha-D-ribose 1-diphosphate: step 6/9. This is Imidazoleglycerol-phosphate dehydratase (hisB) from Lactococcus lactis subsp. lactis (strain IL1403) (Streptococcus lactis).